A 132-amino-acid polypeptide reads, in one-letter code: Sec-independent protein translocase protein TatB (132 aa).

Residues 2 to 22 (FDGIGFMELLLIGILGLVVLG) traverse the membrane as a helical segment. Residues 68–132 (ENQGLKDLSP…VSANPDKSNR (65 aa)) are disordered. Residues 102-122 (TPSASSSAPSESTPSEAPTAE) show a composition bias toward low complexity.

The protein belongs to the TatB family. As to quaternary structure, the Tat system comprises two distinct complexes: a TatABC complex, containing multiple copies of TatA, TatB and TatC subunits, and a separate TatA complex, containing only TatA subunits. Substrates initially bind to the TatABC complex, which probably triggers association of the separate TatA complex to form the active translocon.

The protein localises to the cell inner membrane. Its function is as follows. Part of the twin-arginine translocation (Tat) system that transports large folded proteins containing a characteristic twin-arginine motif in their signal peptide across membranes. Together with TatC, TatB is part of a receptor directly interacting with Tat signal peptides. TatB may form an oligomeric binding site that transiently accommodates folded Tat precursor proteins before their translocation. The chain is Sec-independent protein translocase protein TatB from Shewanella woodyi (strain ATCC 51908 / MS32).